Here is a 307-residue protein sequence, read N- to C-terminus: Deaminated glutathione amidase, chloroplastic/cytosolic (307 aa).

The transit peptide at 1–36 (MNAYSVSLDFTKPSLFTRITLSSQIPLTMATTVNKT) directs the protein to the chloroplast. The region spanning 37-286 (VRVAAAQMTS…TGIVVADIDF (250 aa)) is the CN hydrolase domain. Catalysis depends on E76, which acts as the Proton acceptor. Catalysis depends on K147, which acts as the Proton donor. The Nucleophile role is filled by C188.

The protein belongs to the nitrilase superfamily. NIT1/NIT2 family.

The protein resides in the plastid. Its subcellular location is the chloroplast. It localises to the cytoplasm. It carries out the reaction N-(4-oxoglutaryl)-L-cysteinylglycine + H2O = L-cysteinylglycine + 2-oxoglutarate. The catalysed reaction is N-(4-carboxy-4-oxobutanoyl)-L-ethylglycylglycine + H2O = N-(2-aminobutanoyl)glycine + 2-oxoglutarate. Functionally, catalyzes the hydrolysis of the amide bond in N-(4-oxoglutarate)-L-cysteinylglycine (deaminated glutathione), a metabolite repair reaction to dispose of the harmful deaminated glutathione. Possesses amidase activity toward deaminated ophthalmate in vitro. The polypeptide is Deaminated glutathione amidase, chloroplastic/cytosolic (Arabidopsis thaliana (Mouse-ear cress)).